The following is a 264-amino-acid chain: Intermembrane phospholipid transport system ATP-binding protein MlaF (264 aa).

An ABC transporter domain is found at 6–242 (IEVKNLTFKR…QDLRVVQFLK (237 aa)). 38-45 (GPSGIGKT) lines the ATP pocket.

This sequence belongs to the ABC transporter superfamily. MlaF family. In terms of assembly, the complex is composed of two ATP-binding proteins (MlaF), two transmembrane proteins (MlaE), two cytoplasmic solute-binding proteins (MlaB) and six periplasmic solute-binding proteins (MlaD).

Its subcellular location is the cell inner membrane. In terms of biological role, part of the ABC transporter complex MlaFEDB, which is involved in a phospholipid transport pathway that maintains lipid asymmetry in the outer membrane by retrograde trafficking of phospholipids from the outer membrane to the inner membrane. Responsible for energy coupling to the transport system. This Haemophilus influenzae (strain ATCC 51907 / DSM 11121 / KW20 / Rd) protein is Intermembrane phospholipid transport system ATP-binding protein MlaF.